The chain runs to 216 residues: Type-4 uracil-DNA glycosylase (216 aa).

2 residues coordinate [4Fe-4S] cluster: Cys14 and Cys17. Uracil-binding positions include 41–43 (GEA), Phe55, and Asn82. [4Fe-4S] cluster is bound by residues Cys86 and Cys102. Uracil is bound at residue His164.

This sequence belongs to the uracil-DNA glycosylase (UDG) superfamily. Type 4 (UDGa) family. Interacts with the sliding clamp PCNA3 subunit.

The catalysed reaction is Hydrolyzes single-stranded DNA or mismatched double-stranded DNA and polynucleotides, releasing free uracil.. Functionally, removes uracil bases that are present in DNA as a result of either deamination of cytosine or misincorporation of dUMP instead of dTMP. Can remove uracil from double-stranded DNA containing either a U/G or U/A base pair as well as from single-stranded DNA. The sequence is that of Type-4 uracil-DNA glycosylase from Saccharolobus solfataricus (strain ATCC 35092 / DSM 1617 / JCM 11322 / P2) (Sulfolobus solfataricus).